The following is a 368-amino-acid chain: DNA replication and repair protein RecF (368 aa).

30 to 37 (GNNAQGKT) is a binding site for ATP.

Belongs to the RecF family.

The protein resides in the cytoplasm. Its function is as follows. The RecF protein is involved in DNA metabolism; it is required for DNA replication and normal SOS inducibility. RecF binds preferentially to single-stranded, linear DNA. It also seems to bind ATP. This is DNA replication and repair protein RecF from Streptococcus pyogenes serotype M12 (strain MGAS2096).